The chain runs to 579 residues: Cytochrome P450 monooxygenase ORF6 (579 aa).

A glycan (N-linked (GlcNAc...) asparagine) is linked at N2. Residues 7 to 29 traverse the membrane as a helical segment; the sequence is PLGSFVGTTLLLFILYKLVKLAY. 2 N-linked (GlcNAc...) asparagine glycosylation sites follow: N194 and N390. Heme is bound at residue C512.

The protein belongs to the cytochrome P450 family. It depends on heme as a cofactor.

It localises to the membrane. The protein operates within sesquiterpene biosynthesis. Functionally, cytochrome P450 monooxygenase; part of the gene cluster that mediates the biosynthesis of PR-toxin, a bicyclic sesquiterpene belonging to the eremophilane class and acting as a mycotoxin. The first step of the pathway is catalyzed by the aristolochene synthase which performs the cyclization of trans,trans-farnesyl diphosphate (FPP) to the bicyclic sesquiterpene aristolochene. Following the formation of aristolochene, the non-oxygenated aristolochene is converted to the trioxygenated intermediate eremofortin B, via 7-epi-neopetasone. This conversion appears to involve three enzymes, a hydroxysterol oxidase-like enzyme, the quinone-oxidase prx3 that forms the quinone-type-structure in the bicyclic nucleus of aristolochene with the C8-oxo group and the C-3 hydroxyl group, and the P450 monooxygenase ORF6 that introduces the epoxide at the double bond between carbons 1 and 2. No monoxy or dioxy-intermediates have been reported to be released to the broth, so these three early oxidative reactions may be coupled together. Eremofortin B is further oxidized by another P450 monooxygenase, that introduces a second epoxide between carbons 7 and 11 prior to acetylation to eremofortin A by the acetyltransferase ORF8. The second epoxidation may be performed by a second P450 monooxygenase. After the acetylation step, eremofortin A is converted to eremofortin C and then to PR-toxin. First the conversion of eremofortin A to eremofortin C proceeds by oxidation of the side chain of the molecule at C-12 and is catalyzed by the short-chain oxidoreductase prx1. The cytochrome P450 monooxygenase ORF6 is probably also involved in this step. The primary alcohol formed at C-12 is finally oxidized by the short-chain alcohol dehydrogenase prx4 that forms PR-toxin. This is Cytochrome P450 monooxygenase ORF6 from Penicillium roqueforti (strain FM164).